Reading from the N-terminus, the 267-residue chain is 2-oxo-hept-4-ene-1,7-dioate hydratase (267 aa).

Mg(2+) is bound by residues E106, E108, and E139.

Belongs to the hydratase/decarboxylase family. Homodecamer. It depends on Mg(2+) as a cofactor.

It carries out the reaction (4Z)-2-oxohept-4-enedioate + H2O = (4S)-4-hydroxy-2-oxoheptanedioate. It functions in the pathway aromatic compound metabolism; 4-hydroxyphenylacetate degradation; pyruvate and succinate semialdehyde from 4-hydroxyphenylacetate: step 6/7. In terms of biological role, transforms 2-oxo-hept-4-ene-1,7-dioate (OHED) into 4-hydroxy-2-oxoheptanedioate, a step in the 4-hydroxyphenylacetic acid (4-HPA) degradation pathway. The polypeptide is 2-oxo-hept-4-ene-1,7-dioate hydratase (Escherichia coli).